A 378-amino-acid chain; its full sequence is MAKMMMLQQHQPSFSLLTSSLSDFNGAKLHLQVQYKRKVHQPKGALYVSASSEKKILIMGGTRFIGLFLSRILVKEGHQVTLFTRGKSPIAKQLPGESDQDFADFSSKILHLKGDRKDYDFVKSSLSAEGFDVVYDINGREAEEVEPILEALPKLEQYIYCSSAGVYLKSDILPHCEEDAVDPKSRHKGKLETESLLQSKGVNWTSIRPVYIYGPLNYNPVEEWFFHRLKAGRPIPVPNSGIQISQLGHVKDLATAFLNVLGNEKASREIFNISGEKYVTFDGLAKACAKAGGFPEPEIVHYNPKEFDFGKKKAFPFRDQHFFASVEKAKHVLGWKPEFDLVEGLTDSYNLDFGRGTFRKEADFTTDDMILSKKLVLQ.

The transit peptide at 1 to 50 directs the protein to the chloroplast; it reads MAKMMMLQQHQPSFSLLTSSLSDFNGAKLHLQVQYKRKVHQPKGALYVSA. Serine 240 carries the phosphoserine modification.

This sequence belongs to the NAD(P)-dependent epimerase/dehydratase family. As to quaternary structure, component of a complex made of CSP41A, CSP41B, ribosomes, and the plastid-encoded RNA polymerase. Interacts with CSP41A. Binds DNA when in complex with PRIN2. Highly expressed in seedlings, particularly in photosynthetically active organs. Mostly expressed in young and mature leaves, and, to a lower extent, in flowers. Low expression in etiolated seedlings compared to green seedlings.

The protein resides in the plastid. It localises to the chloroplast. It is found in the plastoglobule. The protein localises to the cytoplasm. Its function is as follows. Binds and cleaves RNA, particularly in stem-loops. Associates with pre-ribosomal particles in chloroplasts, and participates in chloroplast ribosomal RNA metabolism, probably during the final steps of 23S rRNA maturation. May enhance transcription by the plastid-encoded polymerase and translation in plastid via the stabilization of ribosome assembly intermediates. Required for chloroplast integrity. Involved in the regulation of the circadian system. Involved in the regulation of heteroglycans and monosaccharide mobilization. Required for full expression of genes transcribed by the plastid-encoded RNA polymerase (PEP). Essential for embryo development. In Arabidopsis thaliana (Mouse-ear cress), this protein is Chloroplast stem-loop binding protein of 41 kDa b, chloroplastic (CSP41B).